The chain runs to 271 residues: Tryptophan synthase alpha chain (271 aa).

Active-site proton acceptor residues include E49 and D60.

The protein belongs to the TrpA family. As to quaternary structure, tetramer of two alpha and two beta chains.

The enzyme catalyses (1S,2R)-1-C-(indol-3-yl)glycerol 3-phosphate + L-serine = D-glyceraldehyde 3-phosphate + L-tryptophan + H2O. It participates in amino-acid biosynthesis; L-tryptophan biosynthesis; L-tryptophan from chorismate: step 5/5. In terms of biological role, the alpha subunit is responsible for the aldol cleavage of indoleglycerol phosphate to indole and glyceraldehyde 3-phosphate. The protein is Tryptophan synthase alpha chain of Paraburkholderia phymatum (strain DSM 17167 / CIP 108236 / LMG 21445 / STM815) (Burkholderia phymatum).